Here is a 346-residue protein sequence, read N- to C-terminus: S-adenosylmethionine:tRNA ribosyltransferase-isomerase (346 aa).

It belongs to the QueA family. Monomer.

The protein localises to the cytoplasm. It catalyses the reaction 7-aminomethyl-7-carbaguanosine(34) in tRNA + S-adenosyl-L-methionine = epoxyqueuosine(34) in tRNA + adenine + L-methionine + 2 H(+). It participates in tRNA modification; tRNA-queuosine biosynthesis. In terms of biological role, transfers and isomerizes the ribose moiety from AdoMet to the 7-aminomethyl group of 7-deazaguanine (preQ1-tRNA) to give epoxyqueuosine (oQ-tRNA). The polypeptide is S-adenosylmethionine:tRNA ribosyltransferase-isomerase (Cereibacter sphaeroides (strain KD131 / KCTC 12085) (Rhodobacter sphaeroides)).